A 414-amino-acid chain; its full sequence is Probable isoprenylcysteine alpha-carbonyl methylesterase ICME (414 aa).

Residues 1–54 (MQPASPVSGDAGPVAEAVPPRGAPQVLVRRRSVPFSPDSPLAPGSRGGGERRST) form a disordered region. A run of 2 helical transmembrane segments spans residues 90–110 (LAAL…VGYY) and 145–165 (VVAF…GALL). Substrate contacts are provided by residues 151–153 (GGA) and 222–224 (QSA). Residues serine 223, aspartate 323, and histidine 355 contribute to the active site.

This sequence belongs to the AB hydrolase superfamily. Isoprenylcysteine methylesterase family.

It is found in the endoplasmic reticulum membrane. It localises to the golgi apparatus membrane. The catalysed reaction is [protein]-C-terminal S-[(2E,6E)-farnesyl]-L-cysteine methyl ester + H2O = [protein]-C-terminal S-[(2E,6E)-farnesyl]-L-cysteine + methanol + H(+). Its function is as follows. Catalyzes the demethylation of isoprenylcysteine methylesters. In Oryza sativa subsp. japonica (Rice), this protein is Probable isoprenylcysteine alpha-carbonyl methylesterase ICME (IMCE).